The following is a 658-amino-acid chain: Threonine--tRNA ligase (658 aa).

The TGS domain maps to 1–63 (MDQITITFPD…DDNASIDFVA (63 aa)). The catalytic stretch occupies residues 245–548 (DHRKLGRELD…LIEHYAGNFP (304 aa)). Positions 341, 392, and 525 each coordinate Zn(2+).

Belongs to the class-II aminoacyl-tRNA synthetase family. In terms of assembly, homodimer. Requires Zn(2+) as cofactor.

Its subcellular location is the cytoplasm. The enzyme catalyses tRNA(Thr) + L-threonine + ATP = L-threonyl-tRNA(Thr) + AMP + diphosphate + H(+). In terms of biological role, catalyzes the attachment of threonine to tRNA(Thr) in a two-step reaction: L-threonine is first activated by ATP to form Thr-AMP and then transferred to the acceptor end of tRNA(Thr). Also edits incorrectly charged L-seryl-tRNA(Thr). This chain is Threonine--tRNA ligase, found in Rhodopseudomonas palustris (strain ATCC BAA-98 / CGA009).